Consider the following 579-residue polypeptide: Polyadenylate-binding protein, cytoplasmic and nuclear (579 aa).

Basic and acidic residues predominate over residues 1 to 10 (MADITEKTAE). The interval 1 to 32 (MADITEKTAEQLENLSLQDKQEGTNEENQSET) is disordered. 4 consecutive RRM domains span residues 35-113 (ASLY…WSQR), 123-200 (GNIF…PHLS), 216-293 (TNVY…RAQK), and 319-396 (INLF…IAQR). In terms of domain architecture, PABC spans 487 to 566 (GFARNGPAAN…ASAAYESFKQ (80 aa)). A disordered region spans residues 560 to 579 (AYESFKQEQQQPQGEEAQQA). Residues 566–579 (QEQQQPQGEEAQQA) are compositionally biased toward low complexity.

Belongs to the polyadenylate-binding protein type-1 family.

Its subcellular location is the cytoplasm. The protein resides in the nucleus. In terms of biological role, binds the poly(A) tail of mRNA. Appears to be an important mediator of the multiple roles of the poly(A) tail in mRNA biogenesis, stability and translation. In the nucleus, involved in both mRNA cleavage and polyadenylation. Is also required for efficient mRNA export to the cytoplasm. Acts in concert with a poly(A)-specific nuclease (PAN) to affect poly(A) tail shortening, which may occur concomitantly with either nucleocytoplasmic mRNA transport or translational initiation. In the cytoplasm, stimulates translation initiation and regulates mRNA decay through translation termination-coupled poly(A) shortening, probably mediated by PAN. The chain is Polyadenylate-binding protein, cytoplasmic and nuclear (PAB1) from Candida glabrata (strain ATCC 2001 / BCRC 20586 / JCM 3761 / NBRC 0622 / NRRL Y-65 / CBS 138) (Yeast).